The sequence spans 517 residues: MDIIGGQHLRQMWDDLADVYGHKTALICESSGGVVNRYSYLELNQEINRTANLFYTLGIRKGDKVALHLDNCPEFIFCWFGLAKIGAIMVPINARLLREESAWILQNSQACLLVTSAQFYPMYQQIQQEDATQLRHICLTDVALPADDGVSSFTQLKNQQPATLCYAPPLSTDDTAEILFTSGTTSRPKGVVITHYNLRFAGYYSAWQCALRDDDVYLTVMPAFHIDCQCTAAMAAFSAGATFVLVEKYSARAFWGQVQKYRATITECIPMMIRTLMVQPPSANDQQHRLREVMFYLNLSAQEKDAFCERFGVRLLTSYGMTETIVGIIGDRPGDKRRWPSIGRAGFCYEAEIRDDHNRPLPAGEIGEICIKGVPGKTIFKEYFLNPKATAKVLEADGWLHTGDTGYRDEEGFFYFADRRCNMIKRGGENVSCVELENIIAAHPKIQDIVVVGIKDSIRDEAIKAFVVLNEGETLSEEEFFRFCEQNMAKFKVPSYLEIRKDLPRNCSGKIIRKNLK.

The protein belongs to the ATP-dependent AMP-binding enzyme family.

It catalyses the reaction 4-(trimethylamino)butanoate + ATP + CoA = 4-(trimethylamino)butanoyl-CoA + AMP + diphosphate. The catalysed reaction is crotonobetaine + ATP + CoA = crotonobetainyl-CoA + AMP + diphosphate. It carries out the reaction (R)-carnitine + ATP + CoA = (R)-carnitinyl-CoA + AMP + diphosphate. Its pathway is amine and polyamine metabolism; carnitine metabolism. In terms of biological role, catalyzes the transfer of CoA to carnitine, generating the initial carnitinyl-CoA needed for the CaiB reaction cycle. Also has activity toward crotonobetaine and gamma-butyrobetaine. The chain is Crotonobetaine/carnitine--CoA ligase from Escherichia coli O7:K1 (strain IAI39 / ExPEC).